Here is a 411-residue protein sequence, read N- to C-terminus: Protein Rv3035 (411 aa).

The protein is Protein Rv3035 of Mycobacterium tuberculosis (strain ATCC 25618 / H37Rv).